The sequence spans 33 residues: Imperacalcin (33 aa).

Intrachain disulfides connect Cys-3–Cys-17, Cys-10–Cys-21, and Cys-16–Cys-32. 2 important for stimulation of [3H]ryanodine binding to RYR1 regions span residues 8–9 (KR) and 19–20 (KK). The interval 22–24 (KRR) is essential for stimulation of [3H]ryanodine binding to RYR1. Residues 25 to 27 (GTN) form an important for stimulation of [3H]ryanodine binding to RYR1 region.

The protein belongs to the scorpion calcin family. Expressed by the venom gland.

Its subcellular location is the secreted. Its function is as follows. This toxin affects the activity of ryanodine receptors 1, 2 and 3 (RyR1, RyR2 and RyR3). At lower concentrations the toxin increases full openings of the RyRs, and at higher concentrations it inhibits full openings and induces openings to subconductance levels (30% of the full conductance state) and reduces the number of full conductance openings. The different actions may be attributed to the toxins binding at different sites on the RyRs, with binding at a high-affinity site mediating the increase in full openings and the induction of subconductance states evoked upon binding to a lower-affinity site. Furthermore, it triggers calcium release from sarcoplasmic vesicles (11.7 nM are enough to induce a sharp release, and 70% of the total calcium is released after toxin (100 nM) addition) probably by acting as a cell-penetrating peptide (CPP). In addition, it has been shown to dose-dependently stimulate ryanodine binding to RyR1 (EC(50)=8.7 nM). It also augments the bell-shaped calcium-[3H]ryanodine binding curve that is maximal at about 10 uM calcium concentration. It binds a different site as ryanodine. It acts synergistically with caffeine. In vivo, intracerebroventricular injection into mice induces neurotoxic symptoms, followed by death. The chain is Imperacalcin from Pandinus imperator (Emperor scorpion).